A 345-amino-acid chain; its full sequence is Phosphoribosylformylglycinamidine cyclo-ligase (345 aa).

It belongs to the AIR synthase family.

It is found in the cytoplasm. It carries out the reaction 2-formamido-N(1)-(5-O-phospho-beta-D-ribosyl)acetamidine + ATP = 5-amino-1-(5-phospho-beta-D-ribosyl)imidazole + ADP + phosphate + H(+). The protein operates within purine metabolism; IMP biosynthesis via de novo pathway; 5-amino-1-(5-phospho-D-ribosyl)imidazole from N(2)-formyl-N(1)-(5-phospho-D-ribosyl)glycinamide: step 2/2. The sequence is that of Phosphoribosylformylglycinamidine cyclo-ligase from Shewanella loihica (strain ATCC BAA-1088 / PV-4).